Here is a 368-residue protein sequence, read N- to C-terminus: Putative flavoprotein monooxygenase (368 aa).

Residues alanine 14, glutamate 34, serine 41, 52–53 (IT), valine 110, alanine 307, and isoleucine 319 contribute to the FAD site.

Requires FAD as cofactor.

FAD-binding protein that may have monooxygenase activity using NADPH and/or NADH as an electron donor. The chain is Putative flavoprotein monooxygenase from Staphylococcus aureus (strain Mu50 / ATCC 700699).